The chain runs to 192 residues: MRIIMATYTTSDFKPGLKFMQDGEPCVIVENEFVKPGKGQAFTRTRIRKLISGKVLDVNFKSGTSVEAADVMDLNLNYSYKDEDFWYFMHPETFEQYSADSKAVGDAEKWLLDQAECIITLWNGSPISVTPPNFVELEVVDTDPGLKGDTAGTGGKPATLSTGAVVKVPLFIQIGEVIKVDTRSGEYVSRVK.

Lysine 38 carries the post-translational modification N6-(3,6-diaminohexanoyl)-5-hydroxylysine.

It belongs to the elongation factor P family. Post-translationally, may be beta-lysylated on the epsilon-amino group of Lys-38 by the combined action of EpmA and EpmB, and then hydroxylated on the C5 position of the same residue by EpmC (if this protein is present). Lysylation is critical for the stimulatory effect of EF-P on peptide-bond formation. The lysylation moiety may extend toward the peptidyltransferase center and stabilize the terminal 3-CCA end of the tRNA. Hydroxylation of the C5 position on Lys-38 may allow additional potential stabilizing hydrogen-bond interactions with the P-tRNA.

Its subcellular location is the cytoplasm. It functions in the pathway protein biosynthesis; polypeptide chain elongation. Its function is as follows. Involved in peptide bond synthesis. Alleviates ribosome stalling that occurs when 3 or more consecutive Pro residues or the sequence PPG is present in a protein, possibly by augmenting the peptidyl transferase activity of the ribosome. Modification of Lys-38 is required for alleviation. This chain is Elongation factor P, found in Mannheimia succiniciproducens (strain KCTC 0769BP / MBEL55E).